The sequence spans 449 residues: Mycosin-1 (449 aa).

The N-terminal stretch at methionine 1–alanine 23 is a signal peptide. Cysteine 51 and cysteine 120 form a disulfide bridge. Positions proline 66–leucine 389 constitute a Peptidase S8 domain. Residues aspartate 92 and histidine 123 each act as charge relay system in the active site. Disordered stretches follow at residues phenylalanine 160–glycine 179 and threonine 240–arginine 259. Over residues asparagine 170 to glycine 179 the composition is skewed to polar residues. Residues cysteine 206 and cysteine 244 are joined by a disulfide bond. Serine 334 functions as the Charge relay system in the catalytic mechanism. The helical transmembrane segment at isoleucine 421–alanine 441 threads the bilayer.

It belongs to the peptidase S8 family.

Its subcellular location is the cell membrane. May play a dual role in regulation of ESX-1 secretion and virulence. Acts as a protease that cleaves EspB. The polypeptide is Mycosin-1 (Mycolicibacterium smegmatis (strain ATCC 700084 / mc(2)155) (Mycobacterium smegmatis)).